Here is a 283-residue protein sequence, read N- to C-terminus: ATP synthase gamma chain (283 aa).

Belongs to the ATPase gamma chain family. As to quaternary structure, F-type ATPases have 2 components, CF(1) - the catalytic core - and CF(0) - the membrane proton channel. CF(1) has five subunits: alpha(3), beta(3), gamma(1), delta(1), epsilon(1). CF(0) has three main subunits: a, b and c.

Its subcellular location is the cell membrane. Functionally, produces ATP from ADP in the presence of a proton gradient across the membrane. The gamma chain is believed to be important in regulating ATPase activity and the flow of protons through the CF(0) complex. The polypeptide is ATP synthase gamma chain (Clostridium kluyveri (strain NBRC 12016)).